A 523-amino-acid chain; its full sequence is Cytokinin dehydrogenase 3 (523 aa).

Positions 1–31 are cleaved as a signal peptide; sequence MASYNLRSQVRLIAITIVIIITLSTPITTNT. In terms of domain architecture, FAD-binding PCMH-type spans 66–243; the sequence is TKIFPSAVLI…TRARIKLEVA (178 aa). 3 residues coordinate FAD: A100, G102, and G104. Position 105 is a pros-8alpha-FAD histidine (H105). The FAD site is built by S106 and Q110. N153 is a glycosylation site (N-linked (GlcNAc...) asparagine). Positions 167, 172, 178, 182, and 233 each coordinate FAD. N-linked (GlcNAc...) asparagine glycosylation occurs at N408. 3 residues coordinate FAD: Y476, S511, and Q514.

It belongs to the oxygen-dependent FAD-linked oxidoreductase family. Requires FAD as cofactor. In terms of tissue distribution, very weak expression in the young shoot tissues around two weeks after germination. Present in the center of the floral meristem and the boundary between long stamen primordia and gynoecial primordia.

The protein resides in the endoplasmic reticulum. It is found in the vacuole. It carries out the reaction N(6)-dimethylallyladenine + A + H2O = 3-methyl-2-butenal + adenine + AH2. Functionally, catalyzes the oxidation of cytokinins, a family of N(6)-substituted adenine derivatives that are plant hormones, where the substituent is an isopentenyl group. Catalyzes in vitro the oxidation of various types of cytokinin nucleotides that are known as direct products of cytokinin biosynthesis. In association with CKX5 regulates the activity of the reproductive meristems, flower organ size and ovule formation. The sequence is that of Cytokinin dehydrogenase 3 (CKX3) from Arabidopsis thaliana (Mouse-ear cress).